The primary structure comprises 393 residues: Formate-dependent phosphoribosylglycinamide formyltransferase (393 aa).

N(1)-(5-phospho-beta-D-ribosyl)glycinamide contacts are provided by residues glutamate 22–leucine 23 and glutamate 82. ATP contacts are provided by residues arginine 114, lysine 155, serine 160–glutamine 165, glutamate 195–isoleucine 198, and glutamate 203. In terms of domain architecture, ATP-grasp spans arginine 119 to leucine 308. The Mg(2+) site is built by glutamate 267 and glutamate 279. N(1)-(5-phospho-beta-D-ribosyl)glycinamide contacts are provided by residues aspartate 286, lysine 356, and arginine 363–arginine 364.

The protein belongs to the PurK/PurT family. In terms of assembly, homodimer.

It catalyses the reaction N(1)-(5-phospho-beta-D-ribosyl)glycinamide + formate + ATP = N(2)-formyl-N(1)-(5-phospho-beta-D-ribosyl)glycinamide + ADP + phosphate + H(+). Its pathway is purine metabolism; IMP biosynthesis via de novo pathway; N(2)-formyl-N(1)-(5-phospho-D-ribosyl)glycinamide from N(1)-(5-phospho-D-ribosyl)glycinamide (formate route): step 1/1. Its function is as follows. Involved in the de novo purine biosynthesis. Catalyzes the transfer of formate to 5-phospho-ribosyl-glycinamide (GAR), producing 5-phospho-ribosyl-N-formylglycinamide (FGAR). Formate is provided by PurU via hydrolysis of 10-formyl-tetrahydrofolate. This is Formate-dependent phosphoribosylglycinamide formyltransferase from Stutzerimonas stutzeri (strain A1501) (Pseudomonas stutzeri).